A 587-amino-acid chain; its full sequence is Aspartate--tRNA ligase (587 aa).

E174 provides a ligand contact to L-aspartate. Residues 198–201 form an aspartate region; the sequence is QITK. Residue R220 coordinates L-aspartate. Residues 220 to 222 and Q229 contribute to the ATP site; that span reads RDE. H443 is a binding site for L-aspartate. E477 provides a ligand contact to ATP. L-aspartate is bound at residue R484. 529–532 provides a ligand contact to ATP; the sequence is GLDR.

The protein belongs to the class-II aminoacyl-tRNA synthetase family. Type 1 subfamily. As to quaternary structure, homodimer.

Its subcellular location is the cytoplasm. The enzyme catalyses tRNA(Asp) + L-aspartate + ATP = L-aspartyl-tRNA(Asp) + AMP + diphosphate. Its function is as follows. Catalyzes the attachment of L-aspartate to tRNA(Asp) in a two-step reaction: L-aspartate is first activated by ATP to form Asp-AMP and then transferred to the acceptor end of tRNA(Asp). The chain is Aspartate--tRNA ligase from Streptococcus pneumoniae (strain Hungary19A-6).